The chain runs to 599 residues: Elongation factor 4 (599 aa).

In terms of domain architecture, tr-type G spans 5 to 187 (SHIRNFSIIA…RLVTVIPAPE (183 aa)). Residues 17 to 22 (DHGKST) and 134 to 137 (NKMD) each bind GTP.

It belongs to the TRAFAC class translation factor GTPase superfamily. Classic translation factor GTPase family. LepA subfamily.

It is found in the cell inner membrane. It catalyses the reaction GTP + H2O = GDP + phosphate + H(+). Functionally, required for accurate and efficient protein synthesis under certain stress conditions. May act as a fidelity factor of the translation reaction, by catalyzing a one-codon backward translocation of tRNAs on improperly translocated ribosomes. Back-translocation proceeds from a post-translocation (POST) complex to a pre-translocation (PRE) complex, thus giving elongation factor G a second chance to translocate the tRNAs correctly. Binds to ribosomes in a GTP-dependent manner. The protein is Elongation factor 4 of Pseudomonas paraeruginosa (strain DSM 24068 / PA7) (Pseudomonas aeruginosa (strain PA7)).